We begin with the raw amino-acid sequence, 218 residues long: Ras-related protein R-Ras (218 aa).

Positions 1-30 (MSSGAASGTGRGRPRGGGPGPGDPPPSETH) are disordered. Gly residues predominate over residues 7–20 (SGTGRGRPRGGGPG). GTP is bound at residue 36–44 (GGGGVGKSA). Positions 58-66 (YDPTIEDSY) match the Effector region motif. GTP-binding positions include 83 to 87 (DTAGQ), 142 to 145 (NKAD), and 172 to 174 (SAK). Residue Cys-215 is modified to Cysteine methyl ester. Cys-215 is lipidated: S-geranylgeranyl cysteine. The propeptide at 216 to 218 (VLL) is removed in mature form.

This sequence belongs to the small GTPase superfamily. Ras family. In terms of assembly, interacts with PLCE1. Interacts (active GTP-bound form preferentially) with RGS14. Interacts with OSBPL3. Interacts with ZDHHC19. S-palmitoylated by ZDHHC19, leading to increased association with membranes and with rafts/caveolae as well as enhanced cell viability.

The protein resides in the cell membrane. It catalyses the reaction GTP + H2O = GDP + phosphate + H(+). GTP-binding protein with GTPase activity, likely involved in the regulation of MAPK signaling pathway and thereby controlling multiple cellular processes. Regulates the organization of the actin cytoskeleton. With OSPBL3, modulates integrin beta-1 (ITGB1) activity. This Homo sapiens (Human) protein is Ras-related protein R-Ras (RRAS).